The sequence spans 367 residues: Peptide chain release factor 2 (367 aa).

Gln254 carries the post-translational modification N5-methylglutamine.

This sequence belongs to the prokaryotic/mitochondrial release factor family. In terms of processing, methylated by PrmC. Methylation increases the termination efficiency of RF2.

The protein localises to the cytoplasm. Functionally, peptide chain release factor 2 directs the termination of translation in response to the peptide chain termination codons UGA and UAA. This is Peptide chain release factor 2 from Aromatoleum aromaticum (strain DSM 19018 / LMG 30748 / EbN1) (Azoarcus sp. (strain EbN1)).